A 440-amino-acid polypeptide reads, in one-letter code: Gamma-aminobutyric acid receptor subunit pi (440 aa).

An N-terminal signal peptide occupies residues M1–G23. Residues N24–N241 lie on the Extracellular side of the membrane. N-linked (GlcNAc...) asparagine glycosylation is found at N43, N102, and N145. A disulfide bridge connects residues C160 and C174. 2 N-linked (GlcNAc...) asparagine glycosylation sites follow: N196 and N228. The helical transmembrane segment at V242–V262 threads the bilayer. The Cytoplasmic segment spans residues S263–S270. Residues V271–I290 form a helical membrane-spanning segment. Topologically, residues G291–C301 are extracellular. A helical membrane pass occupies residues F302–L322. Residues E323–K419 lie on the Cytoplasmic side of the membrane. Residues L420–F440 form a helical membrane-spanning segment.

Belongs to the ligand-gated ion channel (TC 1.A.9) family. Gamma-aminobutyric acid receptor (TC 1.A.9.5) subfamily. GABRP sub-subfamily. As to quaternary structure, heteropentamer, formed by a combination of alpha (GABRA1-6), beta (GABRB1-3), gamma (GABRG1-3), delta (GABRD), epsilon (GABRE), rho (GABRR1-3), pi (GABRP) and theta (GABRQ) chains, each subunit exhibiting distinct physiological and pharmacological properties. As to expression, expressed in lungs, in alveolar epithelium.

It is found in the cell membrane. Its subcellular location is the apical cell membrane. It catalyses the reaction chloride(in) = chloride(out). Pi subunit of the heteropentameric ligand-gated chloride channel gated by gamma-aminobutyric acid (GABA). GABA-gated chloride channels, also named GABA(A) receptors (GABAAR), consist of five subunits arranged around a central pore and contain GABA active binding site(s) located at the alpha and beta subunit interfaces. When activated by GABA, GABAARs selectively allow the flow of chloride anions across the cell membrane down their electrochemical gradient. Pi-containing GABAARs are mostly located in peripheral tissues. In the uterus, pi subunits modulate uterus contraction by altering the sensitivity of GABAARs to pregnanolone. In the lungs, pi-containing GABAARs contribute to pulmonary fluid transport via luminal secretion of chloride. This is Gamma-aminobutyric acid receptor subunit pi from Rattus norvegicus (Rat).